A 369-amino-acid polypeptide reads, in one-letter code: Aminomethyltransferase (369 aa).

This sequence belongs to the GcvT family. As to quaternary structure, the glycine cleavage system is composed of four proteins: P, T, L and H.

The enzyme catalyses N(6)-[(R)-S(8)-aminomethyldihydrolipoyl]-L-lysyl-[protein] + (6S)-5,6,7,8-tetrahydrofolate = N(6)-[(R)-dihydrolipoyl]-L-lysyl-[protein] + (6R)-5,10-methylene-5,6,7,8-tetrahydrofolate + NH4(+). The glycine cleavage system catalyzes the degradation of glycine. The chain is Aminomethyltransferase from Xanthomonas oryzae pv. oryzae (strain MAFF 311018).